We begin with the raw amino-acid sequence, 203 residues long: Proteasome subunit beta 2 (203 aa).

The propeptide at 1–9 (MGEEFQVGA) is removed in mature form; by autocatalysis. The active-site Nucleophile is the Thr-10.

This sequence belongs to the peptidase T1B family. As to quaternary structure, the 20S proteasome core is composed of 14 alpha and 14 beta subunits that assemble into four stacked heptameric rings, resulting in a barrel-shaped structure. The two inner rings, each composed of seven catalytic beta subunits, are sandwiched by two outer rings, each composed of seven alpha subunits. The catalytic chamber with the active sites is on the inside of the barrel. Has a gated structure, the ends of the cylinder being occluded by the N-termini of the alpha-subunits. Is capped at one or both ends by the proteasome regulatory ATPase, PAN.

It is found in the cytoplasm. The catalysed reaction is Cleavage of peptide bonds with very broad specificity.. Its activity is regulated as follows. The formation of the proteasomal ATPase PAN-20S proteasome complex, via the docking of the C-termini of PAN into the intersubunit pockets in the alpha-rings, triggers opening of the gate for substrate entry. Interconversion between the open-gate and close-gate conformations leads to a dynamic regulation of the 20S proteasome proteolysis activity. Its function is as follows. Component of the proteasome core, a large protease complex with broad specificity involved in protein degradation. The chain is Proteasome subunit beta 2 from Pyrobaculum neutrophilum (strain DSM 2338 / JCM 9278 / NBRC 100436 / V24Sta) (Thermoproteus neutrophilus).